An 89-amino-acid polypeptide reads, in one-letter code: Pigment dispersing factor homolog pdf-2 (89 aa).

The N-terminal stretch at 1–27 (MSSRISVSLLLLAVVATMFFTANVVDA) is a signal peptide.

In terms of biological role, probable ligand of isoforms a and b of the calcitonin receptor-like protein, pdfr-1, a G-protein coupled receptor. May not signal through isoform c of pdfr-1. Involved in locomotion; may play a role in circadian rhythms of locomotor activity. Modulator of egg-laying. The polypeptide is Pigment dispersing factor homolog pdf-2 (Caenorhabditis elegans).